An 81-amino-acid chain; its full sequence is Insulin-like growth factor 1 (81 aa).

Residues 1 to 4 (FASA) constitute a propeptide that is removed on maturation. The b stretch occupies residues 5–33 (GPETLCGAELVDALQFVCGDRGFYFNKPT). Cystine bridges form between cysteine 10–cysteine 52, cysteine 22–cysteine 65, and cysteine 51–cysteine 56. The segment at 34-45 (GYGSSSRRAPQT) is c. Positions 46–66 (GIVDECCFRSCDLRRLEMYCA) are a. Positions 67 to 74 (PLKPAKAA) are d. Positions 75-81 (RSVRAQR) are cleaved as a propeptide — e peptide.

This sequence belongs to the insulin family. In terms of assembly, forms a ternary complex with IGFR1 and ITGAV:ITGB3. Forms a ternary complex with IGFR1 and ITGA6:ITGB4.

It is found in the secreted. Functionally, the insulin-like growth factors, isolated from plasma, are structurally and functionally related to insulin but have a much higher growth-promoting activity. May be a physiological regulator of [1-14C]-2-deoxy-D-glucose (2DG) transport and glycogen synthesis in osteoblasts. Stimulates glucose transport in bone-derived osteoblastic (PyMS) cells and is effective at much lower concentrations than insulin, not only regarding glycogen and DNA synthesis but also with regard to enhancing glucose uptake. May play a role in synapse maturation. Ca(2+)-dependent exocytosis of IGF1 is required for sensory perception of smell in the olfactory bulb. Acts as a ligand for IGF1R. Binds to the alpha subunit of IGF1R, leading to the activation of the intrinsic tyrosine kinase activity which autophosphorylates tyrosine residues in the beta subunit thus initiating a cascade of down-stream signaling events leading to activation of the PI3K-AKT/PKB and the Ras-MAPK pathways. Binds to integrins ITGAV:ITGB3 and ITGA6:ITGB4. Its binding to integrins and subsequent ternary complex formation with integrins and IGFR1 are essential for IGF1 signaling. Induces the phosphorylation and activation of IGFR1, MAPK3/ERK1, MAPK1/ERK2 and AKT1. As part of the MAPK/ERK signaling pathway, acts as a negative regulator of apoptosis in cardiomyocytes via promotion of STUB1/CHIP-mediated ubiquitination and degradation of ICER-type isoforms of CREM. The polypeptide is Insulin-like growth factor 1 (Suncus murinus (Asian house shrew)).